We begin with the raw amino-acid sequence, 470 residues long: Uronate isomerase (470 aa).

This sequence belongs to the metallo-dependent hydrolases superfamily. Uronate isomerase family.

It carries out the reaction D-glucuronate = D-fructuronate. It catalyses the reaction aldehydo-D-galacturonate = keto-D-tagaturonate. The protein operates within carbohydrate metabolism; pentose and glucuronate interconversion. The protein is Uronate isomerase of Salmonella arizonae (strain ATCC BAA-731 / CDC346-86 / RSK2980).